We begin with the raw amino-acid sequence, 106 residues long: Large ribosomal subunit protein uL24 (106 aa).

Belongs to the universal ribosomal protein uL24 family. Part of the 50S ribosomal subunit.

One of two assembly initiator proteins, it binds directly to the 5'-end of the 23S rRNA, where it nucleates assembly of the 50S subunit. Its function is as follows. One of the proteins that surrounds the polypeptide exit tunnel on the outside of the subunit. This Acidithiobacillus ferrooxidans (strain ATCC 53993 / BNL-5-31) (Leptospirillum ferrooxidans (ATCC 53993)) protein is Large ribosomal subunit protein uL24.